The sequence spans 486 residues: tRNA sulfurtransferase (486 aa).

The THUMP domain occupies 60–166 (QKICAMLINI…DNQLFIIIKR (107 aa)). Residues 184-185 (LI), lysine 266, glycine 288, and glutamine 297 contribute to the ATP site. Cysteine 345 and cysteine 458 are joined by a disulfide. The Rhodanese domain occupies 406–484 (LDSTDVVLDI…GFSNVKIYRP (79 aa)). The Cysteine persulfide intermediate role is filled by cysteine 458.

The protein belongs to the ThiI family.

It localises to the cytoplasm. The catalysed reaction is [ThiI sulfur-carrier protein]-S-sulfanyl-L-cysteine + a uridine in tRNA + 2 reduced [2Fe-2S]-[ferredoxin] + ATP + H(+) = [ThiI sulfur-carrier protein]-L-cysteine + a 4-thiouridine in tRNA + 2 oxidized [2Fe-2S]-[ferredoxin] + AMP + diphosphate. It carries out the reaction [ThiS sulfur-carrier protein]-C-terminal Gly-Gly-AMP + S-sulfanyl-L-cysteinyl-[cysteine desulfurase] + AH2 = [ThiS sulfur-carrier protein]-C-terminal-Gly-aminoethanethioate + L-cysteinyl-[cysteine desulfurase] + A + AMP + 2 H(+). It functions in the pathway cofactor biosynthesis; thiamine diphosphate biosynthesis. Functionally, catalyzes the ATP-dependent transfer of a sulfur to tRNA to produce 4-thiouridine in position 8 of tRNAs, which functions as a near-UV photosensor. Also catalyzes the transfer of sulfur to the sulfur carrier protein ThiS, forming ThiS-thiocarboxylate. This is a step in the synthesis of thiazole, in the thiamine biosynthesis pathway. The sulfur is donated as persulfide by IscS. This chain is tRNA sulfurtransferase, found in Blochmanniella pennsylvanica (strain BPEN).